The primary structure comprises 274 residues: HTH-type transcriptional regulator GadX (274 aa).

An HTH araC/xylS-type domain is found at 145–242; sequence TRVCTVINNN…GMTPTEYQER (98 aa). 2 consecutive DNA-binding regions (H-T-H motif) follow at residues 162-183 and 209-232; these read ARIA…REEE and IKRV…RNYY.

Homodimer.

Positively regulates the expression of about fifteen genes involved in acid resistance such as gadA, gadB and gadC. Depending on the conditions (growth phase and medium), can repress gadW. This chain is HTH-type transcriptional regulator GadX (gadX), found in Shigella flexneri.